The primary structure comprises 245 residues: Chymotrypsinogen A (245 aa).

Disulfide bonds link C1/C122, C42/C58, C136/C201, C168/C182, and C191/C220. Positions 14 to 15 (SR) are excised as a propeptide. Residues 16-243 (IVNGEEAVPG…LVNWVQQTLA (228 aa)) form the Peptidase S1 domain. Active-site charge relay system residues include H57 and D102. Positions 147-148 (TN) are excised as a propeptide. Catalysis depends on S195, which acts as the Charge relay system.

This sequence belongs to the peptidase S1 family.

Its subcellular location is the secreted. The protein resides in the extracellular space. It carries out the reaction Preferential cleavage: Tyr-|-Xaa, Trp-|-Xaa, Phe-|-Xaa, Leu-|-Xaa.. In Bos taurus (Bovine), this protein is Chymotrypsinogen A.